Consider the following 686-residue polypeptide: Elongation factor G 2 (686 aa).

The 274-residue stretch at 7-280 folds into the tr-type G domain; it reads TTVRNLGILA…AVVAYLPSPL (274 aa). GTP contacts are provided by residues 16–23, 80–84, and 134–137; these read AHVDAGKT, DTPGH, and NKMD.

The protein belongs to the TRAFAC class translation factor GTPase superfamily. Classic translation factor GTPase family. EF-G/EF-2 subfamily.

The protein resides in the cytoplasm. Catalyzes the GTP-dependent ribosomal translocation step during translation elongation. During this step, the ribosome changes from the pre-translocational (PRE) to the post-translocational (POST) state as the newly formed A-site-bound peptidyl-tRNA and P-site-bound deacylated tRNA move to the P and E sites, respectively. Catalyzes the coordinated movement of the two tRNA molecules, the mRNA and conformational changes in the ribosome. The polypeptide is Elongation factor G 2 (fusB) (Streptomyces coelicolor (strain ATCC BAA-471 / A3(2) / M145)).